The chain runs to 332 residues: Ketol-acid reductoisomerase (NADP(+)) (332 aa).

In terms of domain architecture, KARI N-terminal Rossmann spans 1-182; it reads MAVIYYDKDC…GSNRAGILET (182 aa). Residues 25–28 and 83–86 contribute to the NADP(+) site; these read YGAQ and DTSQ. His-108 is an active-site residue. NADP(+) is bound at residue Gly-134. In terms of domain architecture, KARI C-terminal knotted spans 183-328; it reads TFAEETETDL…AELRSMMSWL (146 aa). Mg(2+) contacts are provided by Asp-191, Glu-195, Glu-227, and Glu-231. Ser-252 contacts substrate.

This sequence belongs to the ketol-acid reductoisomerase family. Mg(2+) is required as a cofactor.

The enzyme catalyses (2R)-2,3-dihydroxy-3-methylbutanoate + NADP(+) = (2S)-2-acetolactate + NADPH + H(+). It carries out the reaction (2R,3R)-2,3-dihydroxy-3-methylpentanoate + NADP(+) = (S)-2-ethyl-2-hydroxy-3-oxobutanoate + NADPH + H(+). The protein operates within amino-acid biosynthesis; L-isoleucine biosynthesis; L-isoleucine from 2-oxobutanoate: step 2/4. It participates in amino-acid biosynthesis; L-valine biosynthesis; L-valine from pyruvate: step 2/4. Functionally, involved in the biosynthesis of branched-chain amino acids (BCAA). Catalyzes an alkyl-migration followed by a ketol-acid reduction of (S)-2-acetolactate (S2AL) to yield (R)-2,3-dihydroxy-isovalerate. In the isomerase reaction, S2AL is rearranged via a Mg-dependent methyl migration to produce 3-hydroxy-3-methyl-2-ketobutyrate (HMKB). In the reductase reaction, this 2-ketoacid undergoes a metal-dependent reduction by NADPH to yield (R)-2,3-dihydroxy-isovalerate. The chain is Ketol-acid reductoisomerase (NADP(+)) from Dehalococcoides mccartyi (strain ATCC BAA-2100 / JCM 16839 / KCTC 5957 / BAV1).